The primary structure comprises 336 residues: MYYPFVRKALFQLDPERAHEFTFQQLRRITGTPLEALVRQKVPTKPVTCMGLTFKNPLGLAAGLDKDGECIDALGAMGFGSLEIGTVTPRPQPGNDKPRLFRLVDAEGLINRMGFNNLGVDNLVENVKKAHFDGILGINIGKNKDTPVENGKDDYLICMEKVYAYAGYIAINISSPNTPGLRTLQYGDALDDLLTAIKNKQNDLQVIHHKYVPVAVKIAPDLCEEELIQVADSLLRHNIDGVIATNTTLDRSLVQGMKNCQQTGGLSGRPLQLKSTEIIRRLSLELKGQLPIIGVGGIDSVIAAREKIAAGATLVQIYSGFIFKGPPLIKEIVTHI.

FMN contacts are provided by residues 62–66 (AGLDK) and Thr86. Substrate is bound at residue Lys66. Residue 111–115 (NRMGF) participates in substrate binding. The FMN site is built by Asn139 and Asn172. Residue Asn172 coordinates substrate. The active-site Nucleophile is the Ser175. Asn177 contacts substrate. FMN contacts are provided by Lys217 and Thr245. 246–247 (NT) is a substrate binding site. Residues Gly268, Gly297, and 318–319 (YS) each bind FMN.

It belongs to the dihydroorotate dehydrogenase family. Type 2 subfamily. As to quaternary structure, monomer. FMN is required as a cofactor.

The protein resides in the cell membrane. It carries out the reaction (S)-dihydroorotate + a quinone = orotate + a quinol. It functions in the pathway pyrimidine metabolism; UMP biosynthesis via de novo pathway; orotate from (S)-dihydroorotate (quinone route): step 1/1. In terms of biological role, catalyzes the conversion of dihydroorotate to orotate with quinone as electron acceptor. The protein is Dihydroorotate dehydrogenase (quinone) of Salmonella typhi.